Here is a 243-residue protein sequence, read N- to C-terminus: Terpene cyclase janB (243 aa).

7 helical membrane-spanning segments follow: residues 19–39, 48–68, 77–97, 112–132, 134–154, 172–194, and 205–225; these read LADL…VGMV, YGMA…YCVF, LGVF…AIIF, LPWI…ALAA, IGPS…LSVG, LWLS…WMYW, and LVLW…VCFW.

The protein belongs to the paxB family.

The protein localises to the membrane. The protein operates within secondary metabolite biosynthesis. Terpene cyclase; part of the gene cluster that mediates the biosynthesis of the indole diterpenes janthitremanes such as shearinine K or shearinine A. The geranylgeranyl diphosphate (GGPP) synthase janG catalyzes the first step in janthitremane biosynthesis via conversion of farnesyl pyrophosphate and isopentyl pyrophosphate into geranylgeranyl pyrophosphate (GGPP). Condensation of indole-3-glycerol phosphate with GGPP by the prenyl transferase janC then forms 3-geranylgeranylindole (3-GGI). Epoxidation by the FAD-dependent monooxygenase janM leads to a epoxidized-GGI that is substrate of the terpene cyclase janB for cyclization to yield paspaline. Paspaline is subsequently converted to 13-desoxypaspaline by the cytochrome P450 monooxygenase janP, via beta-PC-M6 in a series of alpha-face oxidations. The cytochrome P450 monooxygenase janQ is proposed to carry out sequential beta-face oxidation steps at C-7 and C-13 of 13-desoxypaspaline to form paspalicine and paspalinine respectively. The indole diterpene prenyltransferase janD may then convert paspalinine into shearinine K which is substrate of janO and/or additional enzymes for oxidation and cyclization to generate shearinine A. This Penicillium janthinellum (Penicillium vitale) protein is Terpene cyclase janB.